We begin with the raw amino-acid sequence, 230 residues long: 7-cyano-7-deazaguanine synthase (230 aa).

14–24 serves as a coordination point for ATP; sequence LSGGLDSTTTL. Residues Cys194, Cys204, Cys207, and Cys210 each coordinate Zn(2+).

This sequence belongs to the QueC family. It depends on Zn(2+) as a cofactor.

The catalysed reaction is 7-carboxy-7-deazaguanine + NH4(+) + ATP = 7-cyano-7-deazaguanine + ADP + phosphate + H2O + H(+). The protein operates within purine metabolism; 7-cyano-7-deazaguanine biosynthesis. In terms of biological role, catalyzes the ATP-dependent conversion of 7-carboxy-7-deazaguanine (CDG) to 7-cyano-7-deazaguanine (preQ(0)). The protein is 7-cyano-7-deazaguanine synthase of Ruthia magnifica subsp. Calyptogena magnifica.